Here is a 498-residue protein sequence, read N- to C-terminus: Cytochrome P450 71D15 (498 aa).

Residues 3–23 traverse the membrane as a helical; Signal-anchor for type II membrane protein segment; sequence LLQLWSALIILVVTYTISLLI. Cys-437 serves as a coordination point for heme.

It belongs to the cytochrome P450 family. The cofactor is heme.

The protein resides in the endoplasmic reticulum membrane. The enzyme catalyses (4S)-limonene + reduced [NADPH--hemoprotein reductase] + O2 = (1S,6R)-isopiperitenol + oxidized [NADPH--hemoprotein reductase] + H2O + H(+). Its function is as follows. Hydroxylates (-)-(4S)-limonene to (-)-trans-isopiperitenol, a precursor of (-)-menthol, responsible for the cooling sensation of peppermint. Fluorinated substrate analogs are hydroxylated with the same regio- and stereochemistry. The sequence is that of Cytochrome P450 71D15 (CYP71D15) from Mentha piperita (Peppermint).